Reading from the N-terminus, the 250-residue chain is MAAGTSNYWEDLRKQARQLENELDLKLVSFSKLCTSYSHSGSRDGGRDRYSSDTTPLLNGSSQDRMFETMAIEIEQLLARLTGVNDKMAEYTHSAGVPSLNAALMHTLQRHRDILQDYTHEFHKTKANFTAIRERENLMGSVRKDIESYKSGSGVNNRRTELFLKEHDHLRNSDRLIEETISIAMATKENMTSQRGMLKSIHSKMNTLANRFPAVNSLIQRINLRKRRDSLILGGVIGICTILLLLYAFH.

Residue alanine 2 is modified to N-acetylalanine. Residues 2–229 lie on the Cytoplasmic side of the membrane; that stretch reads AAGTSNYWED…QRINLRKRRD (228 aa). The stretch at 9–27 forms a coiled coil; it reads WEDLRKQARQLENELDLKL. The interval 37-59 is disordered; sequence YSHSGSRDGGRDRYSSDTTPLLN. The span at 41–51 shows a compositional bias: basic and acidic residues; that stretch reads GSRDGGRDRYS. Positions 72–93 form a coiled coil; sequence IEIEQLLARLTGVNDKMAEYTH. The residue at position 141 (serine 141) is a Phosphoserine. Residues 230 to 250 traverse the membrane as a helical; Anchor for type IV membrane protein segment; that stretch reads SLILGGVIGICTILLLLYAFH.

This sequence belongs to the GOSR1 family. Component of several multiprotein Golgi SNARE complexes. Identified in a SNARE complex with BET1, STX5 and YKT6, in a SNARE complex with BET1L, STX5 and YKT6, in a SNARE complex with STX5, GOSR2, SEC22B and BET1, and in complex with STX5 and COG3. Interacts with GABARAPL2.

The protein localises to the golgi apparatus membrane. Functionally, involved in transport from the ER to the Golgi apparatus as well as in intra-Golgi transport. It belongs to a super-family of proteins called t-SNAREs or soluble NSF (N-ethylmaleimide-sensitive factor) attachment protein receptor. May play a protective role against hydrogen peroxide induced cytotoxicity under glutathione depleted conditions in neuronal cells by regulating the intracellular ROS levels via inhibition of p38 MAPK (MAPK11, MAPK12, MAPK13 and MAPK14). Participates in docking and fusion stage of ER to cis-Golgi transport. Plays an important physiological role in VLDL-transport vesicle-Golgi fusion and thus in VLDL delivery to the hepatic cis-Golgi. The sequence is that of Golgi SNAP receptor complex member 1 (Gosr1) from Mus musculus (Mouse).